We begin with the raw amino-acid sequence, 462 residues long: Alkaline ceramidase TOD1 (462 aa).

Residues methionine 1 to lysine 18 lie on the Cytoplasmic side of the membrane. A helical membrane pass occupies residues leucine 19–leucine 39. The Lumenal segment spans residues serine 40–glycine 462. N-linked (GlcNAc...) asparagine glycosylation is found at asparagine 121, asparagine 132, and asparagine 449.

This sequence belongs to the alkaline ceramidase family. As to expression, preferentially expressed in pollen grains, pollen tubes and silique guard cells, but barely detectable in roots, stems and leaves.

It is found in the golgi apparatus membrane. The catalysed reaction is an N-acylsphing-4-enine + H2O = sphing-4-enine + a fatty acid. It participates in lipid metabolism. Endoplasmic reticulum ceramidase that catalyzes the hydrolysis of ceramides into sphingosine and free fatty acids at alkaline pH (e.g. pH 9.5). Inactive on phytoceramide. Involved in the regulation of turgor pressure in guard cells and pollen tubes. This is Alkaline ceramidase TOD1 from Arabidopsis thaliana (Mouse-ear cress).